A 178-amino-acid chain; its full sequence is Major non-capsid protein (178 aa).

It belongs to the tenuiviruses NCP family.

It is found in the host cytoplasm. In terms of biological role, induces the formation of large intracellular inclusion body, organized in amorphous and crystalline arrays. Presumably the main cause of the stripe disease observed in host. The polypeptide is Major non-capsid protein (Rice stripe virus (isolate T) (RSV)).